A 531-amino-acid chain; its full sequence is GMP synthase [glutamine-hydrolyzing] (531 aa).

In terms of domain architecture, Glutamine amidotransferase type-1 spans Lys-20 to Asp-213. Cys-97 acts as the Nucleophile in catalysis. Residues His-187 and Glu-189 contribute to the active site. A GMPS ATP-PPase domain is found at Trp-214–Arg-406. Ser-241–Ala-247 is a binding site for ATP.

In terms of assembly, homodimer.

The catalysed reaction is XMP + L-glutamine + ATP + H2O = GMP + L-glutamate + AMP + diphosphate + 2 H(+). The protein operates within purine metabolism; GMP biosynthesis; GMP from XMP (L-Gln route): step 1/1. Its function is as follows. Catalyzes the synthesis of GMP from XMP. This Afipia carboxidovorans (strain ATCC 49405 / DSM 1227 / KCTC 32145 / OM5) (Oligotropha carboxidovorans) protein is GMP synthase [glutamine-hydrolyzing].